Consider the following 2701-residue polypeptide: MAEEGAVAVCVRVRPLNSREESLGETAQVYWKTDNNVIYQVDGSKSFNFDRVFHGNETTKNVYEEIAAPIIDSAIQGYNGTIFAYGQTASGKTYTMMGSEDHLGVIPRAIHDIFQKIKKFPDREFLLRVSYMEIYNETITDLLCGTQKMKPLIIREDVNRNVYVADLTEEVVYTSEMALKWITKGEKSRHYGETKMNQRSSRSHTIFRMILESREKGEPSNCEGSVKVSHLNLVDLAGSERAAQTGAAGVRLKEGCNINRSLFILGQVIKKLSDGQVGGFINYRDSKLTRILQNSLGGNAKTRIICTITPVSFDETLTALQFASTAKYMKNTPYVNEVSTDEALLKRYRKEIMDLKKQLEEVSLETRAQAMEKDQLAQLLEEKDLLQKVQNEKIENLTRMLVTSSSLTLQQELKAKRKRRVTWCLGKINKMKNSNYADQFNIPTNITTKTHKLSINLLREIDESVCSESDVFSNTLDTLSEIEWNPATKLLNQENIESELNSLRADYDNLVLDYEQLRTEKEEMELKLKEKNDLDEFEALERKTKKDQEMQLIHEISNLKNLVKHAEVYNQDLENELSSKVELLREKEDQIKKLQEYIDSQKLENIKMDLSYSLESIEDPKQMKQTLFDAETVALDAKRESAFLRSENLELKEKMKELATTYKQMENDIQLYQSQLEAKKKMQVDLEKELQSAFNEITKLTSLIDGKVPKDLLCNLELEGKITDLQKELNKEVEENEALREEVILLSELKSLPSEVERLRKEIQDKSEELHIITSEKDKLFSEVVHKESRVQGLLEEIGKTKDDLATTQSNYKSTDQEFQNFKTLHMDFEQKYKMVLEENERMNQEIVNLSKEAQKFDSSLGALKTELSYKTQELQEKTREVQERLNEMEQLKEQLENRDSTLQTVEREKTLITEKLQQTLEEVKTLTQEKDDLKQLQESLQIERDQLKSDIHDTVNMNIDTQEQLRNALESLKQHQETINTLKSKISEEVSRNLHMEENTGETKDEFQQKMVGIDKKQDLEAKNTQTLTADVKDNEIIEQQRKIFSLIQEKNELQQMLESVIAEKEQLKTDLKENIEMTIENQEELRLLGDELKKQQEIVAQEKNHAIKKEGELSRTCDRLAEVEEKLKEKSQQLQEKQQQLLNVQEEMSEMQKKINEIENLKNELKNKELTLEHMETERLELAQKLNENYEEVKSITKERKVLKELQKSFETERDHLRGYIREIEATGLQTKEELKIAHIHLKEHQETIDELRRSVSEKTAQIINTQDLEKSHTKLQEEIPVLHEEQELLPNVKEVSETQETMNELELLTEQSTTKDSTTLARIEMERLRLNEKFQESQEEIKSLTKERDNLKTIKEALEVKHDQLKEHIRETLAKIQESQSKQEQSLNMKEKDNETTKIVSEMEQFKPKDSALLRIEIEMLGLSKRLQESHDEMKSVAKEKDDLQRLQEVLQSESDQLKENIKEIVAKHLETEEELKVAHCCLKEQEETINELRVNLSEKETEISTIQKQLEAINDKLQNKIQEIYEKEEQFNIKQISEVQEKVNELKQFKEHRKAKDSALQSIESKMLELTNRLQESQEEIQIMIKEKEEMKRVQEALQIERDQLKENTKEIVAKMKESQEKEYQFLKMTAVNETQEKMCEIEHLKEQFETQKLNLENIETENIRLTQILHENLEEMRSVTKERDDLRSVEETLKVERDQLKENLRETITRDLEKQEELKIVHMHLKEHQETIDKLRGIVSEKTNEISNMQKDLEHSNDALKAQDLKIQEELRIAHMHLKEQQETIDKLRGIVSEKTDKLSNMQKDLENSNAKLQEKIQELKANEHQLITLKKDVNETQKKVSEMEQLKKQIKDQSLTLSKLEIENLNLAQKLHENLEEMKSVMKERDNLRRVEETLKLERDQLKESLQETKARDLEIQQELKTARMLSKEHKETVDKLREKISEKTIQISDIQKDLDKSKDELQKKIQELQKKELQLLRVKEDVNMSHKKINEMEQLKKQFEAQNLSMQSVRMDNFQLTKKLHESLEEIRIVAKERDELRRIKESLKMERDQFIATLREMIARDRQNHQVKPEKRLLSDGQQHLTESLREKCSRIKELLKRYSEMDDHYECLNRLSLDLEKEIEFQKELSMRVKANLSLPYLQTKHIEKLFTANQRCSMEFHRIMKKLKYVLSYVTKIKEEQHESINKFEMDFIDEVEKQKELLIKIQHLQQDCDVPSRELRDLKLNQNMDLHIEEILKDFSESEFPSIKTEFQQVLSNRKEMTQFLEEWLNTRFDIEKLKNGIQKENDRICQVNNFFNNRIIAIMNESTEFEERSATISKEWEQDLKSLKEKNEKLFKNYQTLKTSLASGAQVNPTTQDNKNPHVTSRATQLTTEKIRELENSLHEAKESAMHKESKIIKMQKELEVTNDIIAKLQAKVHESNKCLEKTKETIQVLQDKVALGAKPYKEEIEDLKMKLVKIDLEKMKNAKEFEKEISATKATVEYQKEVIRLLRENLRRSQQAQDTSVISEHTDPQPSNKPLTCGGGSGIVQNTKALILKSEHIRLEKEISKLKQQNEQLIKQKNELLSNNQHLSNEVKTWKERTLKREAHKQVTCENSPKSPKVTGTASKKKQITPSQCKERNLQDPVPKESPKSCFFDSRSKSLPSPHPVRYFDNSSLGLCPEVQNAGAESVDSQPGPWHASSGKDVPECKTQ.

The Kinesin motor domain occupies alanine 6 to methionine 329. An ATP-binding site is contributed by glycine 86–threonine 93. Residues asparagine 336–arginine 2590 are a coiled coil. Phosphoserine occurs at positions 611 and 2083. A kinetochore-binding domain region spans residues lysine 2126–lysine 2476. The segment at serine 2355–threonine 2376 is disordered. Position 2389 is a phosphoserine (serine 2389). Over residues glutamine 2508–proline 2527 the composition is skewed to polar residues. Disordered regions lie at residues glutamine 2508 to glycine 2533 and lysine 2588 to glutamine 2701. A globular autoinhibitory domain region spans residues glutamine 2510–cysteine 2698. The span at lysine 2588 to valine 2600 shows a compositional bias: basic and acidic residues. Polar residues predominate over residues threonine 2601–glutamine 2625. Residues cysteine 2626–proline 2640 are compositionally biased toward basic and acidic residues. 3 positions are modified to phosphoserine: serine 2639, serine 2647, and serine 2651. The residue at position 2698 (cysteine 2698) is a Cysteine methyl ester. Residue cysteine 2698 is the site of S-farnesyl cysteine attachment. Residues lysine 2699–glutamine 2701 constitute a propeptide, removed in mature form.

This sequence belongs to the TRAFAC class myosin-kinesin ATPase superfamily. Kinesin family. In terms of assembly, monomer. Interacts with CENPF. Interacts with BUB1B. Interacts with SEPT7. Interacts with KIF18A. Interacts with PRC1. Interacts with NUF2; this interaction determines kinetochore localization. Interacts with SKAP; this interaction greatly favors SKAP binding to microtubules. Interacts with TRAPPC12. Interacts with CTCF. Post-translationally, the C-terminal inhibitory domain is phosphorylated. Phosphorylation relieves autoinhibition of the kinetochore motor. In terms of processing, sumoylated with SUMO2 and SUMO3. The sumoylation mediates the association to the kinetochore.

It localises to the chromosome. The protein localises to the centromere. Its subcellular location is the kinetochore. The protein resides in the cytoplasm. It is found in the cytoskeleton. It localises to the spindle. Functionally, microtubule plus-end-directed kinetochore motor which plays an important role in chromosome congression, microtubule-kinetochore conjugation and spindle assembly checkpoint activation. Drives chromosome congression (alignment of chromosomes at the spindle equator resulting in the formation of the metaphase plate) by mediating the lateral sliding of polar chromosomes along spindle microtubules towards the spindle equator and by aiding the establishment and maintenance of connections between kinetochores and spindle microtubules. The transport of pole-proximal chromosomes towards the spindle equator is favored by microtubule tracks that are detyrosinated. Acts as a processive bi-directional tracker of dynamic microtubule tips; after chromosomes have congressed, continues to play an active role at kinetochores, enhancing their links with dynamic microtubule ends. Suppresses chromosome congression in NDC80-depleted cells and contributes positively to congression only when microtubules are stabilized. Plays an important role in the formation of stable attachments between kinetochores and spindle microtubules The stabilization of kinetochore-microtubule attachment also requires CENPE-dependent localization of other proteins to the kinetochore including BUB1B, MAD1 and MAD2. Plays a role in spindle assembly checkpoint activation (SAC) via its interaction with BUB1B resulting in the activation of its kinase activity, which is important for activating SAC. Necessary for the mitotic checkpoint signal at individual kinetochores to prevent aneuploidy due to single chromosome loss. This is Centromere-associated protein E (CENPE) from Homo sapiens (Human).